The following is a 119-amino-acid chain: Large ribosomal subunit protein bL20 (119 aa).

The protein belongs to the bacterial ribosomal protein bL20 family.

Binds directly to 23S ribosomal RNA and is necessary for the in vitro assembly process of the 50S ribosomal subunit. It is not involved in the protein synthesizing functions of that subunit. This Afipia carboxidovorans (strain ATCC 49405 / DSM 1227 / KCTC 32145 / OM5) (Oligotropha carboxidovorans) protein is Large ribosomal subunit protein bL20.